The following is a 128-amino-acid chain: Probable 4-amino-4-deoxy-L-arabinose-phosphoundecaprenol flippase subunit ArnF (128 aa).

The Cytoplasmic segment spans residues 1–5; that stretch reads MKGYG. A helical membrane pass occupies residues 6 to 26; the sequence is WGIGSVVLVTVAQLILKWGMM. Topologically, residues 27–47 are periplasmic; it reads NTPLMSLADINGQFVFNHLPQ. A helical membrane pass occupies residues 48 to 68; that stretch reads FIAVICGLAGYALSMLCWFFA. The Cytoplasmic portion of the chain corresponds to 69 to 77; the sequence is LRYLPLNRA. Residues 78–98 traverse the membrane as a helical segment; the sequence is YPLLSLSYALVYLGAVSLPWF. Residues 99–101 lie on the Periplasmic side of the membrane; it reads SES. Residues 102–122 form a helical membrane-spanning segment; the sequence is ATLLKTLGAGFILLGIWLINT. The Cytoplasmic portion of the chain corresponds to 123–128; it reads KPIAKD.

The protein belongs to the ArnF family. Heterodimer of ArnE and ArnF.

The protein localises to the cell inner membrane. It functions in the pathway bacterial outer membrane biogenesis; lipopolysaccharide biosynthesis. Its function is as follows. Translocates 4-amino-4-deoxy-L-arabinose-phosphoundecaprenol (alpha-L-Ara4N-phosphoundecaprenol) from the cytoplasmic to the periplasmic side of the inner membrane. This Yersinia enterocolitica serotype O:8 / biotype 1B (strain NCTC 13174 / 8081) protein is Probable 4-amino-4-deoxy-L-arabinose-phosphoundecaprenol flippase subunit ArnF.